The primary structure comprises 232 residues: Orotate phosphoribosyltransferase (232 aa).

5-phospho-alpha-D-ribose 1-diphosphate is bound by residues Arg-107, Lys-108, Lys-111, His-113, and 133–141 (EDLTTAGGS). Thr-137 is a binding site for orotate.

This sequence belongs to the purine/pyrimidine phosphoribosyltransferase family. PyrE subfamily. As to quaternary structure, homodimer. It depends on Mg(2+) as a cofactor.

The enzyme catalyses orotidine 5'-phosphate + diphosphate = orotate + 5-phospho-alpha-D-ribose 1-diphosphate. Its pathway is pyrimidine metabolism; UMP biosynthesis via de novo pathway; UMP from orotate: step 1/2. Functionally, catalyzes the transfer of a ribosyl phosphate group from 5-phosphoribose 1-diphosphate to orotate, leading to the formation of orotidine monophosphate (OMP). The chain is Orotate phosphoribosyltransferase from Sinorhizobium medicae (strain WSM419) (Ensifer medicae).